We begin with the raw amino-acid sequence, 363 residues long: tRNA/tmRNA (uracil-C(5))-methyltransferase (363 aa).

Residues Gln-187, Tyr-215, Asn-220, Glu-236, and Asp-296 each coordinate S-adenosyl-L-methionine. Cys-321 serves as the catalytic Nucleophile. Glu-355 (proton acceptor) is an active-site residue.

This sequence belongs to the class I-like SAM-binding methyltransferase superfamily. RNA M5U methyltransferase family. TrmA subfamily.

It carries out the reaction uridine(54) in tRNA + S-adenosyl-L-methionine = 5-methyluridine(54) in tRNA + S-adenosyl-L-homocysteine + H(+). It catalyses the reaction uridine(341) in tmRNA + S-adenosyl-L-methionine = 5-methyluridine(341) in tmRNA + S-adenosyl-L-homocysteine + H(+). In terms of biological role, dual-specificity methyltransferase that catalyzes the formation of 5-methyluridine at position 54 (m5U54) in all tRNAs, and that of position 341 (m5U341) in tmRNA (transfer-mRNA). In Pseudomonas fluorescens, this protein is tRNA/tmRNA (uracil-C(5))-methyltransferase.